Consider the following 975-residue polypeptide: Probable ATP-dependent RNA helicase CG8611 (975 aa).

Over residues 1–24 the composition is skewed to polar residues; the sequence is MVENISLNVTVKSSARKNQQQSPA. 3 disordered regions span residues 1-38, 50-104, and 127-295; these read MVEN…QDFD, AIVV…DDLM, and TTKP…FRTK. Low complexity predominate over residues 64–94; the sequence is PTNSSVPNTTKSPTPSVSSSKSAISTLSASP. A phosphoserine mark is found at S75 and S99. The segment covering 190–203 has biased composition (basic and acidic residues); sequence QLEEERRQKRREEG. 3 positions are modified to phosphoserine: S210, S220, and S224. Acidic residues predominate over residues 242–261; the sequence is IEDSGESGEESATSDEEPDE. The span at 269 to 285 shows a compositional bias: basic and acidic residues; it reads QEKEPKQTAKKPPKAEE. Positions 327 to 356 match the Q motif motif; sequence SKISTLGLHPHAVKNLEDLLSIRELTSVQQ. A Helicase ATP-binding domain is found at 359 to 548; the sequence is IPEVLQGKDV…GLTLKNPLYI (190 aa). ATP is bound at residue 372–379; that stretch reads SQTGSGKT. The short motif at 485 to 488 is the DEAD box element; that stretch reads DEAD. Residues 616 to 789 enclose the Helicase C-terminal domain; sequence LLAKEVDASP…DMYAYLQTLL (174 aa). S667 is subject to Phosphoserine. Disordered regions lie at residues 915–942 and 955–975; these read LQQR…VGRS and NMSE…RKQA.

This sequence belongs to the DEAD box helicase family. DDX31/DBP7 subfamily.

It catalyses the reaction ATP + H2O = ADP + phosphate + H(+). Functionally, probable ATP-dependent RNA helicase. This is Probable ATP-dependent RNA helicase CG8611 from Drosophila melanogaster (Fruit fly).